We begin with the raw amino-acid sequence, 300 residues long: Epimerase family protein SAV0769 (300 aa).

This sequence belongs to the NAD(P)-dependent epimerase/dehydratase family. SDR39U1 subfamily.

The polypeptide is Epimerase family protein SAV0769 (Staphylococcus aureus (strain Mu50 / ATCC 700699)).